The following is an 805-amino-acid chain: Acetyl-CoA decarbonylase/synthase complex subunit alpha 3 (805 aa).

6 residues coordinate [4Fe-4S] cluster: Cys-72, Cys-75, Cys-76, Cys-78, Cys-83, and Cys-93. His-116 contributes to the CO binding site. Positions 249, 277, and 322 each coordinate [Ni-4Fe-4S] cluster. 2 consecutive 4Fe-4S ferredoxin-type domains span residues 407 to 435 (EEFK…IPEA) and 445 to 474 (EYLE…LNVL). 8 residues coordinate [4Fe-4S] cluster: Cys-416, Cys-419, Cys-422, Cys-426, Cys-454, Cys-457, Cys-460, and Cys-464. [Ni-4Fe-4S] cluster contacts are provided by Cys-522, Cys-551, and Cys-586.

Belongs to the Ni-containing carbon monoxide dehydrogenase family. Heterotetramer of two alpha and two epsilon subunits. The ACDS complex is made up of alpha, epsilon, beta, gamma and delta subunits with a probable stoichiometry of (alpha(2)epsilon(2))(4)-beta(8)-(gamma(1)delta(1))(8). The cofactor is [4Fe-4S] cluster. [Ni-4Fe-4S] cluster is required as a cofactor.

It carries out the reaction CO + 2 oxidized [2Fe-2S]-[ferredoxin] + H2O = 2 reduced [2Fe-2S]-[ferredoxin] + CO2 + 2 H(+). Its pathway is one-carbon metabolism; methanogenesis from acetate. Functionally, part of the ACDS complex that catalyzes the reversible cleavage of acetyl-CoA, allowing growth on acetate as sole source of carbon and energy. The alpha-epsilon subcomponent functions as a carbon monoxide dehydrogenase. This chain is Acetyl-CoA decarbonylase/synthase complex subunit alpha 3, found in Methanosarcina acetivorans (strain ATCC 35395 / DSM 2834 / JCM 12185 / C2A).